A 534-amino-acid polypeptide reads, in one-letter code: Bifunctional purine biosynthesis protein PurH (534 aa).

An MGS-like domain is found at 6–151 (TRLPIRRALI…KNHKDVAIVV (146 aa)).

The protein belongs to the PurH family.

The enzyme catalyses (6R)-10-formyltetrahydrofolate + 5-amino-1-(5-phospho-beta-D-ribosyl)imidazole-4-carboxamide = 5-formamido-1-(5-phospho-D-ribosyl)imidazole-4-carboxamide + (6S)-5,6,7,8-tetrahydrofolate. It catalyses the reaction IMP + H2O = 5-formamido-1-(5-phospho-D-ribosyl)imidazole-4-carboxamide. It participates in purine metabolism; IMP biosynthesis via de novo pathway; 5-formamido-1-(5-phospho-D-ribosyl)imidazole-4-carboxamide from 5-amino-1-(5-phospho-D-ribosyl)imidazole-4-carboxamide (10-formyl THF route): step 1/1. It functions in the pathway purine metabolism; IMP biosynthesis via de novo pathway; IMP from 5-formamido-1-(5-phospho-D-ribosyl)imidazole-4-carboxamide: step 1/1. The polypeptide is Bifunctional purine biosynthesis protein PurH (Pseudomonas syringae pv. tomato (strain ATCC BAA-871 / DC3000)).